Consider the following 298-residue polypeptide: tRNA pseudouridine synthase B (298 aa).

Aspartate 46 functions as the Nucleophile in the catalytic mechanism.

It belongs to the pseudouridine synthase TruB family. Type 1 subfamily.

It catalyses the reaction uridine(55) in tRNA = pseudouridine(55) in tRNA. Its function is as follows. Responsible for synthesis of pseudouridine from uracil-55 in the psi GC loop of transfer RNAs. The protein is tRNA pseudouridine synthase B of Paracoccus denitrificans (strain Pd 1222).